Here is a 641-residue protein sequence, read N- to C-terminus: Macrolide export ATP-binding/permease protein MacB (641 aa).

In terms of domain architecture, ABC transporter spans 2-240 (IKLENIKKSF…LKQNLKEIKP (239 aa)). 38–45 (GQSGSGKS) serves as a coordination point for ATP. Transmembrane regions (helical) follow at residues 268–288 (FLTM…VALA), 516–536 (LLIS…VMNI), 565–585 (FLIE…GLAY), and 601–621 (IFST…GIVF).

This sequence belongs to the ABC transporter superfamily. Macrolide exporter (TC 3.A.1.122) family. Homodimer.

It localises to the cell inner membrane. In terms of biological role, non-canonical ABC transporter that contains transmembrane domains (TMD), which form a pore in the inner membrane, and an ATP-binding domain (NBD), which is responsible for energy generation. Confers resistance against macrolides. This Campylobacter fetus subsp. fetus (strain 82-40) protein is Macrolide export ATP-binding/permease protein MacB.